Here is a 93-residue protein sequence, read N- to C-terminus: Small ribosomal subunit protein uS19 (93 aa).

Belongs to the universal ribosomal protein uS19 family.

Its function is as follows. Protein S19 forms a complex with S13 that binds strongly to the 16S ribosomal RNA. This Helicobacter pylori (strain G27) protein is Small ribosomal subunit protein uS19.